Consider the following 206-residue polypeptide: Na(+)-translocating NADH-quinone reductase subunit E (206 aa).

Helical transmembrane passes span 12–32 (AVFV…FIAI), 36–56 (IQTA…TVPV), 85–105 (FLGL…LEMT), 118–138 (GIFL…LFMV), 148–168 (VVYG…LAGI), and 184–204 (LGIT…FSGV).

Belongs to the NqrDE/RnfAE family. As to quaternary structure, composed of six subunits; NqrA, NqrB, NqrC, NqrD, NqrE and NqrF.

The protein resides in the cell inner membrane. The catalysed reaction is a ubiquinone + n Na(+)(in) + NADH + H(+) = a ubiquinol + n Na(+)(out) + NAD(+). Functionally, NQR complex catalyzes the reduction of ubiquinone-1 to ubiquinol by two successive reactions, coupled with the transport of Na(+) ions from the cytoplasm to the periplasm. NqrA to NqrE are probably involved in the second step, the conversion of ubisemiquinone to ubiquinol. The protein is Na(+)-translocating NADH-quinone reductase subunit E of Alcanivorax borkumensis (strain ATCC 700651 / DSM 11573 / NCIMB 13689 / SK2).